The sequence spans 67 residues: DNA-directed RNA polymerase subunit omega (67 aa).

The protein belongs to the RNA polymerase subunit omega family. As to quaternary structure, the RNAP catalytic core consists of 2 alpha, 1 beta, 1 beta' and 1 omega subunit. When a sigma factor is associated with the core the holoenzyme is formed, which can initiate transcription.

The catalysed reaction is RNA(n) + a ribonucleoside 5'-triphosphate = RNA(n+1) + diphosphate. Promotes RNA polymerase assembly. Latches the N- and C-terminal regions of the beta' subunit thereby facilitating its interaction with the beta and alpha subunits. The sequence is that of DNA-directed RNA polymerase subunit omega from Listeria innocua serovar 6a (strain ATCC BAA-680 / CLIP 11262).